A 421-amino-acid polypeptide reads, in one-letter code: Vasopressin V1b receptor (421 aa).

The Extracellular segment spans residues 1-35; the sequence is MDSEPSWTATPSPGGTLFVPNTTTPWLGRDEELAK. Asn-21 carries an N-linked (GlcNAc...) asparagine glycan. The helical transmembrane segment at 36–59 threads the bilayer; that stretch reads VEIGILATVLVLATGGNLAVLLIL. Topologically, residues 60–71 are cytoplasmic; the sequence is GLQGHKRSRMHL. A helical membrane pass occupies residues 72–93; that stretch reads FVLHLALTDLGVALFQVLPQLL. The Extracellular portion of the chain corresponds to 94–108; sequence WDITYRFQGSDLLCR. Cys-107 and Cys-186 are oxidised to a cystine. A helical membrane pass occupies residues 109–130; it reads AVKYLQVLSMFASTYMLLAMTL. Residues 131–151 are Cytoplasmic-facing; sequence DRYLAVCHPLRSLQQPSQSTY. Residues 152-173 traverse the membrane as a helical segment; the sequence is PLIAAPWLLAAILSLPQVFIFS. The Extracellular portion of the chain corresponds to 174–202; that stretch reads LREVIQGSGVLDCWADFYFSWGPRAYITW. Residues 203–223 traverse the membrane as a helical segment; it reads TTMAIFVLPVVVLTACYGLIC. The Cytoplasmic portion of the chain corresponds to 224 to 280; it reads HEIYKNLKVKTQAGREERRGWPKSSSSAAAAATRGLPSRVSSISTISRAKIRTVKMT. The chain crosses the membrane as a helical span at residues 281 to 300; that stretch reads FVIVLAYIACWAPFFSVQMW. At 301 to 318 the chain is on the extracellular side; that stretch reads SVWDENAPNEDSTNVAFT. The chain crosses the membrane as a helical span at residues 319 to 338; the sequence is ISMLLGNLSSCCNPWIYMGF. The Cytoplasmic segment spans residues 339-421; it reads NSHLLPRSLS…GEATMETSIS (83 aa). The tract at residues 399–421 is disordered; the sequence is KPAGSLKDLEQVDGEATMETSIS.

This sequence belongs to the G-protein coupled receptor 1 family. Vasopressin/oxytocin receptor subfamily.

The protein resides in the cell membrane. Receptor for arginine vasopressin. The activity of this receptor is mediated by G proteins which activate a phosphatidyl-inositol-calcium second messenger system. This is Vasopressin V1b receptor (Avpr1b) from Mus musculus (Mouse).